We begin with the raw amino-acid sequence, 232 residues long: Ubiquinone biosynthesis O-methyltransferase (232 aa).

Residues arginine 36, glycine 55, aspartate 76, and leucine 120 each coordinate S-adenosyl-L-methionine.

It belongs to the methyltransferase superfamily. UbiG/COQ3 family.

The catalysed reaction is a 3-demethylubiquinol + S-adenosyl-L-methionine = a ubiquinol + S-adenosyl-L-homocysteine + H(+). It catalyses the reaction a 3-(all-trans-polyprenyl)benzene-1,2-diol + S-adenosyl-L-methionine = a 2-methoxy-6-(all-trans-polyprenyl)phenol + S-adenosyl-L-homocysteine + H(+). It functions in the pathway cofactor biosynthesis; ubiquinone biosynthesis. O-methyltransferase that catalyzes the 2 O-methylation steps in the ubiquinone biosynthetic pathway. This chain is Ubiquinone biosynthesis O-methyltransferase, found in Pseudomonas putida (strain W619).